The chain runs to 96 residues: Small ribosomal subunit protein bS6 (96 aa).

Belongs to the bacterial ribosomal protein bS6 family.

Its function is as follows. Binds together with bS18 to 16S ribosomal RNA. The sequence is that of Small ribosomal subunit protein bS6 from Streptomyces griseus subsp. griseus (strain JCM 4626 / CBS 651.72 / NBRC 13350 / KCC S-0626 / ISP 5235).